Here is a 385-residue protein sequence, read N- to C-terminus: Putative ribosomal RNA large subunit methyltransferase MJ1653 (385 aa).

The PUA domain maps to 2 to 81 (TTKLYVDFGG…LDENYIREKI (80 aa)).

This sequence belongs to the methyltransferase superfamily. RlmI family.

It is found in the cytoplasm. This chain is Putative ribosomal RNA large subunit methyltransferase MJ1653, found in Methanocaldococcus jannaschii (strain ATCC 43067 / DSM 2661 / JAL-1 / JCM 10045 / NBRC 100440) (Methanococcus jannaschii).